We begin with the raw amino-acid sequence, 97 residues long: Large ribosomal subunit protein uL23 (97 aa).

It belongs to the universal ribosomal protein uL23 family. Part of the 50S ribosomal subunit. Contacts protein L29, and trigger factor when it is bound to the ribosome.

In terms of biological role, one of the early assembly proteins it binds 23S rRNA. One of the proteins that surrounds the polypeptide exit tunnel on the outside of the ribosome. Forms the main docking site for trigger factor binding to the ribosome. The polypeptide is Large ribosomal subunit protein uL23 (Anaeromyxobacter dehalogenans (strain 2CP-1 / ATCC BAA-258)).